Here is a 425-residue protein sequence, read N- to C-terminus: Adenylosuccinate synthetase (425 aa).

GTP-binding positions include 12–18 (GDEGKGK) and 40–42 (GHT). The Proton acceptor role is filled by D13. The Mg(2+) site is built by D13 and G40. IMP-binding positions include 13–16 (DEGK), 38–41 (NAGH), T129, R143, N221, T236, and R300. Catalysis depends on H41, which acts as the Proton donor. 296–302 (VTTGRKR) is a binding site for substrate. GTP-binding positions include R302, 328 to 330 (KLD), and 410 to 412 (GVG).

Belongs to the adenylosuccinate synthetase family. As to quaternary structure, homodimer. Requires Mg(2+) as cofactor.

The protein localises to the cytoplasm. It carries out the reaction IMP + L-aspartate + GTP = N(6)-(1,2-dicarboxyethyl)-AMP + GDP + phosphate + 2 H(+). It participates in purine metabolism; AMP biosynthesis via de novo pathway; AMP from IMP: step 1/2. Functionally, plays an important role in the de novo pathway and in the salvage pathway of purine nucleotide biosynthesis. Catalyzes the first committed step in the biosynthesis of AMP from IMP. This Phaeosphaeria nodorum (strain SN15 / ATCC MYA-4574 / FGSC 10173) (Glume blotch fungus) protein is Adenylosuccinate synthetase.